A 281-amino-acid polypeptide reads, in one-letter code: UPF0750 membrane protein YvjA (281 aa).

A run of 5 helical transmembrane segments spans residues 14-34, 56-76, 77-97, 108-128, and 149-169; these read YVYILIGAAITAVSFNVFLLP, AAYVQWIINIPLFIAGVILLG, GKFGLKTLAGSVFLPLVVFLT, LLAAIFGGVGIGIGIGIVYLG, and SLGKCLAIIDGMIVVTAMIVF.

Belongs to the UPF0750 family.

The protein resides in the cell membrane. In Bacillus subtilis (strain 168), this protein is UPF0750 membrane protein YvjA (yvjA).